Consider the following 134-residue polypeptide: Histone H2A (134 aa).

Over residues 1–10 (MTGGKSGGKA) the composition is skewed to gly residues. The segment at 1-24 (MTGGKSGGKASGSKNAQSRSSKAG) is disordered. N6-acetyllysine occurs at positions 5 and 9. N5-methylglutamine is present on Q106. The segment at 115 to 134 (QNLLPKKTPKSGKGPGSQEL) is disordered. Residue S131 is modified to Phosphoserine. The short motif at 131–132 (SQ) is the [ST]-Q motif element.

It belongs to the histone H2A family. The nucleosome is a histone octamer containing two molecules each of H2A, H2B, H3 and H4 assembled in one H3-H4 heterotetramer and two H2A-H2B heterodimers. The octamer wraps approximately 147 bp of DNA. Post-translationally, phosphorylated to form H2AS128ph (gamma-H2A) in response to DNA double-strand breaks (DSBs) generated by exogenous genotoxic agents and by stalled replication forks. Phosphorylation is dependent on the DNA damage checkpoint kinases mec1/ATR and tel1/ATM, spreads on either side of a detected DSB site and may mark the surrounding chromatin for recruitment of proteins required for DNA damage signaling and repair. Gamma-H2A is removed from the DNA prior to the strand invasion-primer extension step of the repair process and subsequently dephosphorylated. Dephosphorylation is necessary for efficient recovery from the DNA damage checkpoint. In terms of processing, acetylated by esa1 to form H2AK4ac and H2AK7ac.

Its subcellular location is the nucleus. The protein localises to the chromosome. In terms of biological role, core component of nucleosome which plays a central role in DNA double strand break (DSB) repair. Nucleosomes wrap and compact DNA into chromatin, limiting DNA accessibility to the cellular machineries which require DNA as a template. Histones thereby play a central role in transcription regulation, DNA repair, DNA replication and chromosomal stability. DNA accessibility is regulated via a complex set of post-translational modifications of histones, also called histone code, and nucleosome remodeling. The chain is Histone H2A (httA) from Aspergillus niger (strain ATCC MYA-4892 / CBS 513.88 / FGSC A1513).